The following is a 515-amino-acid chain: MSALIIQLSRVVGTLREEAGFLWKYAAFMVFIYLLLPKPAYKTNVRVPTIKFMSPWLPGIISRLLFNSKAPSVIYDGYSKYKTSAYKLLKPDGDLVVLSTRYAEELRQLPASTLNALEATFSDHVGEYTTILTDSHLHTETIQKRLTPAIGRLIPRIISELDYAFQVEFPNCDNQFVAINSYEVFLRLVARVGARIFIGDELCREEKWLKASIDYTKNIFLTIALLRPFPGFLHPIVGRILPSSRSLDRQLVYIKEELLGPLINKRRSLEAVSDSNYEKPDDFLQWMMDLAKTEKESHPHNLAQRLLGITSMAVVHTSAMSMTHILYDLLVMPQWVQPLRDEIQTEIADWRSTTQSNLNNLRVMDSFLKESQRFNPPGELSFHRVVKHDLTLSDGLLLPKGTHICMAAGPISMDPEVVENPDVFDAFRFVKEKVPTSGFVSTGPSHMHFGLGRYACPGRFFASIVMKLILSRFLAQYEFHFAPDQTERPRNLLIGDKIVPNVSTPIFIKNRAPEI.

The helical transmembrane segment at 20–36 (GFLWKYAAFMVFIYLLL) threads the bilayer. Residue Cys456 participates in heme binding. Asn501 is a glycosylation site (N-linked (GlcNAc...) asparagine).

The protein belongs to the cytochrome P450 family. Requires heme as cofactor.

Its subcellular location is the membrane. It functions in the pathway secondary metabolite biosynthesis. Functionally, cytochrome P450 monooxygenase; part of the gene cluster that mediates the biosynthesis of the indole diterpenes janthitremanes such as shearinine K or shearinine A. The geranylgeranyl diphosphate (GGPP) synthase janG catalyzes the first step in janthitremane biosynthesis via conversion of farnesyl pyrophosphate and isopentyl pyrophosphate into geranylgeranyl pyrophosphate (GGPP). Condensation of indole-3-glycerol phosphate with GGPP by the prenyl transferase janC then forms 3-geranylgeranylindole (3-GGI). Epoxidation by the FAD-dependent monooxygenase janM leads to a epoxidized-GGI that is substrate of the terpene cyclase janB for cyclization to yield paspaline. Paspaline is subsequently converted to 13-desoxypaspaline by the cytochrome P450 monooxygenase janP, via beta-PC-M6 in a series of alpha-face oxidations. The cytochrome P450 monooxygenase janQ is proposed to carry out sequential beta-face oxidation steps at C-7 and C-13 of 13-desoxypaspaline to form paspalicine and paspalinine respectively. The indole diterpene prenyltransferase janD may then convert paspalinine into shearinine K which is substrate of janO and/or additional enzymes for oxidation and cyclization to generate shearinine A. This Penicillium janthinellum (Penicillium vitale) protein is Cytochrome P450 monooxygenase janP.